The sequence spans 163 residues: Steroid receptor-associated and regulated protein (163 aa).

Residues 1–16 (MAFSKDPRRTSLRDSS) are compositionally biased toward basic and acidic residues. Disordered stretches follow at residues 1–30 (MAFSKDPRRTSLRDSSVEMSSGTQPSCAPK) and 96–149 (ALDG…EKVK). Polar residues predominate over residues 17 to 26 (VEMSSGTQPS).

As to quaternary structure, interacts with 14-3-3 proteins.

In terms of biological role, may regulate the transcriptional function of androgen and estrogen receptors. This Mus musculus (Mouse) protein is Steroid receptor-associated and regulated protein.